The chain runs to 704 residues: ATP-dependent zinc metalloprotease FTSH 5, chloroplastic (704 aa).

Residues 1–58 (MATTSSNPLLLSSNFLGSQIIISAPTPKTTTKSLPFSVISRKRYQISQSEKLMKSLPS) constitute a chloroplast transit peptide. Residues 59 to 76 (QAALAALLFSSSSPQALA) constitute a thylakoid transit peptide. Residues 193-213 (FDFIGNLLFPLLAFGGLFYLF) form a helical membrane-spanning segment. An ATP-binding site is contributed by 290–297 (GPPGTGKT). Position 512 (histidine 512) interacts with Zn(2+). Glutamate 513 is a catalytic residue. Zn(2+) contacts are provided by histidine 516 and aspartate 593.

It in the N-terminal section; belongs to the AAA ATPase family. This sequence in the C-terminal section; belongs to the peptidase M41 family. In terms of assembly, heterohexamers with FTSH1, FTSH2 and FTSH8. The cofactor is Zn(2+). Ubiquitous.

Its subcellular location is the plastid. It is found in the chloroplast thylakoid membrane. Part of a complex that function as an ATP-dependent zinc metallopeptidase. Involved in the thylakoid formation and in the removal of damaged D1 in the photosystem II, preventing cell death under high-intensity light conditions. Not involved in the degradation of the light-harvesting complex of photosystem II (LHC II) or in thermotolerance. The protein is ATP-dependent zinc metalloprotease FTSH 5, chloroplastic (FTSH5) of Arabidopsis thaliana (Mouse-ear cress).